We begin with the raw amino-acid sequence, 207 residues long: Proteasome subunit beta 2 (207 aa).

A propeptide spans 1–13 (METNNKLKILKTG) (removed in mature form; by autocatalysis). The Nucleophile role is filled by Thr-14.

This sequence belongs to the peptidase T1B family. In terms of assembly, the 20S proteasome core is composed of 14 alpha and 14 beta subunits that assemble into four stacked heptameric rings, resulting in a barrel-shaped structure. The two inner rings, each composed of seven catalytic beta subunits, are sandwiched by two outer rings, each composed of seven alpha subunits. The catalytic chamber with the active sites is on the inside of the barrel. Has a gated structure, the ends of the cylinder being occluded by the N-termini of the alpha-subunits. Is capped at one or both ends by the proteasome regulatory ATPase, PAN.

The protein resides in the cytoplasm. It catalyses the reaction Cleavage of peptide bonds with very broad specificity.. Its activity is regulated as follows. The formation of the proteasomal ATPase PAN-20S proteasome complex, via the docking of the C-termini of PAN into the intersubunit pockets in the alpha-rings, triggers opening of the gate for substrate entry. Interconversion between the open-gate and close-gate conformations leads to a dynamic regulation of the 20S proteasome proteolysis activity. Component of the proteasome core, a large protease complex with broad specificity involved in protein degradation. This Sulfurisphaera tokodaii (strain DSM 16993 / JCM 10545 / NBRC 100140 / 7) (Sulfolobus tokodaii) protein is Proteasome subunit beta 2.